The primary structure comprises 187 residues: Shikimate kinase (187 aa).

ATP is bound at residue 14 to 19 (GSGKST). Serine 18 contributes to the Mg(2+) binding site. Substrate-binding residues include aspartate 36, arginine 60, and glycine 82. Arginine 120 contacts ATP. Residue arginine 147 participates in substrate binding.

Belongs to the shikimate kinase family. In terms of assembly, monomer. The cofactor is Mg(2+).

Its subcellular location is the cytoplasm. The catalysed reaction is shikimate + ATP = 3-phosphoshikimate + ADP + H(+). It functions in the pathway metabolic intermediate biosynthesis; chorismate biosynthesis; chorismate from D-erythrose 4-phosphate and phosphoenolpyruvate: step 5/7. Its function is as follows. Catalyzes the specific phosphorylation of the 3-hydroxyl group of shikimic acid using ATP as a cosubstrate. This chain is Shikimate kinase, found in Chlorobaculum parvum (strain DSM 263 / NCIMB 8327) (Chlorobium vibrioforme subsp. thiosulfatophilum).